A 181-amino-acid polypeptide reads, in one-letter code: Protein Abitram (181 aa).

It belongs to the ABITRAM family. In terms of assembly, interacts with F-actin. Interacts with G-actin.

The protein resides in the nucleus speckle. The protein localises to the cell projection. It is found in the lamellipodium. It localises to the nucleus. Its subcellular location is the growth cone. The protein resides in the dendrite. Its function is as follows. Actin-binding protein that regulates actin polymerization, filopodia dynamics and increases the branching of proximal dendrites of developing neurons. The chain is Protein Abitram from Homo sapiens (Human).